We begin with the raw amino-acid sequence, 241 residues long: Ribonuclease PH (241 aa).

Phosphate is bound by residues Arg-87 and 125-127 (GTR).

Belongs to the RNase PH family. As to quaternary structure, homohexameric ring arranged as a trimer of dimers.

It catalyses the reaction tRNA(n+1) + phosphate = tRNA(n) + a ribonucleoside 5'-diphosphate. Functionally, phosphorolytic 3'-5' exoribonuclease that plays an important role in tRNA 3'-end maturation. Removes nucleotide residues following the 3'-CCA terminus of tRNAs; can also add nucleotides to the ends of RNA molecules by using nucleoside diphosphates as substrates, but this may not be physiologically important. Probably plays a role in initiation of 16S rRNA degradation (leading to ribosome degradation) during starvation. The chain is Ribonuclease PH from Dehalococcoides mccartyi (strain ATCC BAA-2100 / JCM 16839 / KCTC 5957 / BAV1).